A 283-amino-acid polypeptide reads, in one-letter code: Pantothenate synthetase (283 aa).

26–33 serves as a coordination point for ATP; sequence MGNLHEGH. His33 functions as the Proton donor in the catalytic mechanism. (R)-pantoate is bound at residue Gln57. Gln57 is a beta-alanine binding site. 144–147 provides a ligand contact to ATP; it reads GKKD. Residue Gln150 coordinates (R)-pantoate. ATP is bound by residues Val173 and 181–184; that span reads LSSR.

It belongs to the pantothenate synthetase family. Homodimer.

It localises to the cytoplasm. The catalysed reaction is (R)-pantoate + beta-alanine + ATP = (R)-pantothenate + AMP + diphosphate + H(+). The protein operates within cofactor biosynthesis; (R)-pantothenate biosynthesis; (R)-pantothenate from (R)-pantoate and beta-alanine: step 1/1. Catalyzes the condensation of pantoate with beta-alanine in an ATP-dependent reaction via a pantoyl-adenylate intermediate. The polypeptide is Pantothenate synthetase (Ralstonia pickettii (strain 12J)).